Reading from the N-terminus, the 505-residue chain is MELSYQALRVASQNREAEELRTEARRKNLLILIMHYLLQEGYVDSANSLEQETKISSRRFEVCDNVDLETILMEYESYYYIKFQKYPKITKKALDHDSRVQPKPRSAGKLRRAGSNSTQGLPRIGQQQVIHRPVSSSYYRTNGHQKALSRENSKQESGGNSPQEASEVGLNVSAISKASGEGSHTRRRQVIDFRSMIQDTIKGASQEIALNSLNCNPDPSERLIKPVGAFIGGNSEMRELAAVISRDIYLQNPNVRWDDIIGLDAAKRLVKEAVVYPIRYPQLFTGILSPWKGLLLYGPPGTGKTLLAKAVATECNTTFFNISASTIVSKWRGDSEKLVRVLFELARYHAPSTIFLDELESVMSQRGTGPGELDYAMLRRLEKRILVDLPSKEARQAMIQHWLPPISNSSGVELRMDLDYSTLGEETDGYSGSDIRLVCKEAAMRPVRKIFDALENHHSEHKKLPVISLETVTTSDFSEVLAHTKPSAKSLAEKYSAWQNEFESV.

A LisH domain is found at 25 to 57; that stretch reads RRKNLLILIMHYLLQEGYVDSANSLEQETKISS. Disordered stretches follow at residues 94-127 and 140-167; these read LDHDSRVQPKPRSAGKLRRAGSNSTQGLPRIGQQ and RTNGHQKALSRENSKQESGGNSPQEASE. Polar residues-rich tracts occupy residues 114–127 and 155–164; these read GSNSTQGLPRIGQQ and QESGGNSPQE. 298 to 305 provides a ligand contact to ATP; sequence GPPGTGKT.

Belongs to the AAA ATPase family. Katanin p60 subunit A1 subfamily. A-like 2 sub-subfamily.

It localises to the cytoplasm. It is found in the cytoskeleton. The protein localises to the spindle. Its subcellular location is the spindle pole. The enzyme catalyses n ATP + n H2O + a microtubule = n ADP + n phosphate + (n+1) alpha/beta tubulin heterodimers.. Functionally, severs microtubules in vitro in an ATP-dependent manner. This activity may promote rapid reorganization of cellular microtubule arrays. The chain is Katanin p60 ATPase-containing subunit A-like 2 (katnal2) from Xenopus laevis (African clawed frog).